The sequence spans 521 residues: Histidine--tRNA ligase (521 aa).

L-histidine contacts are provided by residues 137 to 139, Arg164, Gln180, Asp184, Arg338, and 342 to 343; these read DLT and YY.

The protein belongs to the class-II aminoacyl-tRNA synthetase family.

It catalyses the reaction tRNA(His) + L-histidine + ATP = L-histidyl-tRNA(His) + AMP + diphosphate + H(+). Involved in protein synthesis. Catalyzes the specific attachment of an amino acid to its cognate tRNA in a 2 step reaction: the amino acid (AA) is first activated by ATP to form AA-AMP and then transferred to the acceptor end of the tRNA. Required for germ cell development. The protein is Histidine--tRNA ligase of Caenorhabditis elegans.